The primary structure comprises 182 residues: MFKYIGDIVKGTGTQLRSLVMVFSHGFRKRDTLQYPEEPVYLPPRYRGRIVLTRDPDGEERCVACNLCAVACPVGCISLQKAETEDGRWYPEFFRINFSRCIFCGLCEEACPTTAIQLTPDFEMAEFKRQDLVYEKEDLLISGPGKNPDYNFYRVAGMAIAGKPKGSAQNEAEPINVKSLLP.

2 4Fe-4S ferredoxin-type domains span residues 52–82 and 92–121; these read LTRD…LQKA and EFFR…LTPD. [4Fe-4S] cluster is bound by residues cysteine 62, cysteine 65, cysteine 68, cysteine 72, cysteine 101, cysteine 104, cysteine 107, and cysteine 111.

Belongs to the complex I 23 kDa subunit family. NDH-1 is composed of 13 different subunits. Subunits NuoA, H, J, K, L, M, N constitute the membrane sector of the complex. Requires [4Fe-4S] cluster as cofactor.

It localises to the cell inner membrane. It catalyses the reaction a quinone + NADH + 5 H(+)(in) = a quinol + NAD(+) + 4 H(+)(out). Its function is as follows. NDH-1 shuttles electrons from NADH, via FMN and iron-sulfur (Fe-S) centers, to quinones in the respiratory chain. The immediate electron acceptor for the enzyme in this species is believed to be ubiquinone. Couples the redox reaction to proton translocation (for every two electrons transferred, four hydrogen ions are translocated across the cytoplasmic membrane), and thus conserves the redox energy in a proton gradient. The polypeptide is NADH-quinone oxidoreductase subunit I (Pseudomonas entomophila (strain L48)).